The primary structure comprises 340 residues: Cathepsin S (340 aa).

Residues 1-17 (MRAPGHAAIRWLFWMPL) form the signal peptide. The propeptide at 18–122 (VCSVAMEQLQ…VTFRSYSNRT (105 aa)) is activation peptide. Asn-120 carries N-linked (GlcNAc...) asparagine glycosylation. 4 disulfides stabilise this stretch: Cys-134–Cys-233, Cys-144–Cys-189, Cys-178–Cys-222, and Cys-281–Cys-329. Cys-147 is an active-site residue. Residues His-287 and Asn-307 contribute to the active site.

The protein belongs to the peptidase C1 family. Widely expressed with highest expression found in non-skeletal tissues. Relatively high levels found in skeletal tissues. Expressed in spleen, B cells, dendritic cells and macrophages.

The protein resides in the lysosome. It is found in the secreted. The protein localises to the cytoplasmic vesicle. It localises to the phagosome. The enzyme catalyses Similar to cathepsin L, but with much less activity on Z-Phe-Arg-|-NHMec, and more activity on the Z-Val-Val-Arg-|-Xaa compound.. Thiol protease. Key protease responsible for the removal of the invariant chain from MHC class II molecules and MHC class II antigen presentation. The bond-specificity of this proteinase is in part similar to the specificities of cathepsin L. The polypeptide is Cathepsin S (Ctss) (Mus musculus (Mouse)).